A 623-amino-acid polypeptide reads, in one-letter code: Glutathione import ATP-binding protein GsiA (623 aa).

2 ABC transporter domains span residues 15–269 (VENL…RALL) and 314–564 (LRVR…RKLL). ATP is bound by residues 49-56 (GESGSGKS) and 357-364 (GESGSGKS).

This sequence belongs to the ABC transporter superfamily. Glutathione importer (TC 3.A.1.5.11) family. The complex is composed of two ATP-binding proteins (GsiA), two transmembrane proteins (GsiC and GsiD) and a solute-binding protein (GsiB).

The protein resides in the cell inner membrane. The enzyme catalyses glutathione(out) + ATP + H2O = glutathione(in) + ADP + phosphate + H(+). In terms of biological role, part of the ABC transporter complex GsiABCD involved in glutathione import. Responsible for energy coupling to the transport system. This Shigella sonnei (strain Ss046) protein is Glutathione import ATP-binding protein GsiA.